We begin with the raw amino-acid sequence, 351 residues long: Sulfate/thiosulfate import ATP-binding protein CysA (351 aa).

An ABC transporter domain is found at 3–237; that stretch reads ITVRNLHKRF…PRSAFVYEFL (235 aa). ATP is bound at residue 35 to 42; that stretch reads GPSGCGKT.

This sequence belongs to the ABC transporter superfamily. Sulfate/tungstate importer (TC 3.A.1.6) family. As to quaternary structure, the complex is composed of two ATP-binding proteins (CysA), two transmembrane proteins (CysT and CysW) and a solute-binding protein (CysP).

The protein resides in the cell inner membrane. The catalysed reaction is sulfate(out) + ATP + H2O = sulfate(in) + ADP + phosphate + H(+). The enzyme catalyses thiosulfate(out) + ATP + H2O = thiosulfate(in) + ADP + phosphate + H(+). In terms of biological role, part of the ABC transporter complex CysAWTP involved in sulfate/thiosulfate import. Responsible for energy coupling to the transport system. The chain is Sulfate/thiosulfate import ATP-binding protein CysA from Burkholderia mallei (strain ATCC 23344).